The primary structure comprises 364 residues: Capsular polysaccharide phosphotransferase fcs1 (364 aa).

The protein belongs to the stealth family.

Part of a group II capsule biosynthesis locus. The chain is Capsular polysaccharide phosphotransferase fcs1 (fcs1) from Haemophilus influenzae.